We begin with the raw amino-acid sequence, 293 residues long: 4-diphosphocytidyl-2-C-methyl-D-erythritol kinase (293 aa).

Residue K16 is part of the active site. Residue 99 to 109 (PMGAGLGGGSS) coordinates ATP. The active site involves D141.

Belongs to the GHMP kinase family. IspE subfamily.

It carries out the reaction 4-CDP-2-C-methyl-D-erythritol + ATP = 4-CDP-2-C-methyl-D-erythritol 2-phosphate + ADP + H(+). The protein operates within isoprenoid biosynthesis; isopentenyl diphosphate biosynthesis via DXP pathway; isopentenyl diphosphate from 1-deoxy-D-xylulose 5-phosphate: step 3/6. Catalyzes the phosphorylation of the position 2 hydroxy group of 4-diphosphocytidyl-2C-methyl-D-erythritol. The chain is 4-diphosphocytidyl-2-C-methyl-D-erythritol kinase from Burkholderia thailandensis (strain ATCC 700388 / DSM 13276 / CCUG 48851 / CIP 106301 / E264).